A 676-amino-acid polypeptide reads, in one-letter code: MEKNLPDIFFFPNCVNVFSYKYSQDEFSNMSKTERDSFSLAVFPVIKHRWHNAHVVKHKGIYKVSTEARGKKVSPPSLGKPAHINLTAKQYIYSEHTISFECYSFLKCITNTEINSFDEYILRGLLEAGNSLQIFSNSVGKRTDTIGVLGNKYPFSKIPLASLTPKAQREIFSAWISHRPVVLTGGTGVGKTSQVPKLLLWFNYLFGGFSTLDKITDFHERPVILSLPRIALVRLHSNTILKSLGFKVLDGSPISLRYGSIPEELINKQPKKYGIVFSTHKLSLTKLFSYGTLIIDEVHEHDQIGDIIIAVARKHHTKIDSMFLMTATLEDDRERLKVFLPNPAFIHIPGDTLFKISEVFIHNKINPSSRMAYIEEEKRNLVTAIQMYTPPDGSSGIVFVASVAQCHEYKSYLEKRLPYDMYIIHGKVLDIDEILEKVYSSPNVSIIISTPYLESSVTIRNVTHIYDMGRVFVPAPFGGSQEFISKSMRDQRKGRVGRVNPGTYVYFYDLSYMKSIQRIDSEFLHNYILYANKFNLTLPEDLFIIPTNLDILWRTKEYIDSFDISTETWNKLLSNYYMKMIEYAKLYVLSPILAEELDNFERTGELTSIVQEAILSLNLRIKILNFKHKDDDTYIHFCKILFGVYNGTNATIYYHRPLTGYMNMISDTIFVPVDNN.

The region spanning 172–347 (FSAWISHRPV…VFLPNPAFIH (176 aa)) is the Helicase ATP-binding domain. 185-192 (GGTGVGKT) is an ATP binding site. The short motif at 296–299 (DEVH) is the DEXH box element. In terms of domain architecture, Helicase C-terminal spans 366–535 (NPSSRMAYIE…NYILYANKFN (170 aa)).

The protein belongs to the DEAD box helicase family. DEAH subfamily. In terms of assembly, monomer.

The protein resides in the virion. It catalyses the reaction ATP + H2O = ADP + phosphate + H(+). Functionally, NTP-dependent helicase that catalyzes unidirectional unwinding of 3'tailed duplex RNAs and plays an important role during transcription of early mRNAs, presumably by preventing R-loop formation behind the elongating RNA polymerase. Might also play a role in the export of newly synthesized mRNA chains out of the core into the cytoplasm. Required for replication and propagation of viral particles. The chain is RNA helicase NPH-II (OPG084) from Vaccinia virus (strain Ankara) (VACV).